A 153-amino-acid chain; its full sequence is Putative transmembrane protein INAFM2 (153 aa).

Over residues 1-23 the composition is skewed to basic and acidic residues; sequence MKERDAAPAERGKPATYTGDKKA. The segment at 1–24 is disordered; that stretch reads MKERDAAPAERGKPATYTGDKKAK. A helical membrane pass occupies residues 36-56; sequence LATVFAYVLSVSLAAIVLAVY. Residues 66–153 form a disordered region; that stretch reads AGTSGGAAGP…EETAAAPGSR (88 aa). Residues 79–101 are compositionally biased toward low complexity; it reads GSNATGPSGTSGAAAAGPNTTGS. Residues 118–131 are compositionally biased toward pro residues; that stretch reads PAPPEPPADSPPAG.

Its subcellular location is the membrane. The protein is Putative transmembrane protein INAFM2 of Homo sapiens (Human).